Reading from the N-terminus, the 261-residue chain is Small ribosomal subunit protein uS2 (261 aa).

The disordered stretch occupies residues 224 to 261 (GKQGQDDSEDVEKEMADKAAAENDDEESIEEVVEKSED). Positions 245 to 254 (ENDDEESIEE) are enriched in acidic residues.

This sequence belongs to the universal ribosomal protein uS2 family.

This Lactobacillus gasseri (strain ATCC 33323 / DSM 20243 / BCRC 14619 / CIP 102991 / JCM 1131 / KCTC 3163 / NCIMB 11718 / NCTC 13722 / AM63) protein is Small ribosomal subunit protein uS2.